The following is a 631-amino-acid chain: Phosphomethylpyrimidine synthase (631 aa).

Substrate is bound by residues Asn239, Met268, Tyr297, His333, 353–355, 394–397, and Glu433; these read SRG and DGLR. His437 is a Zn(2+) binding site. Residue Tyr460 participates in substrate binding. His501 serves as a coordination point for Zn(2+). Positions 581, 584, and 589 each coordinate [4Fe-4S] cluster.

It belongs to the ThiC family. In terms of assembly, homodimer. [4Fe-4S] cluster serves as cofactor.

It catalyses the reaction 5-amino-1-(5-phospho-beta-D-ribosyl)imidazole + S-adenosyl-L-methionine = 4-amino-2-methyl-5-(phosphooxymethyl)pyrimidine + CO + 5'-deoxyadenosine + formate + L-methionine + 3 H(+). Its pathway is cofactor biosynthesis; thiamine diphosphate biosynthesis. Catalyzes the synthesis of the hydroxymethylpyrimidine phosphate (HMP-P) moiety of thiamine from aminoimidazole ribotide (AIR) in a radical S-adenosyl-L-methionine (SAM)-dependent reaction. The chain is Phosphomethylpyrimidine synthase from Salmonella typhi.